Here is a 297-residue protein sequence, read N- to C-terminus: Beta-glucoside kinase (297 aa).

5-11 (AFDIGGT) lines the ATP pocket.

Belongs to the ROK (NagC/XylR) family. Homotetramer.

The enzyme catalyses D-cellobiose + ATP = 6-phospho-beta-D-glucosyl-(1-&gt;4)-D-glucose + ADP + H(+). With respect to regulation, is inhibited by N-ethylmaleimide in vitro, but ATP affords considerable protection against the inhibitor. Catalyzes the ATP-dependent phosphorylation of a wide variety of beta-D-glucosides, to produce 6-phospho-beta-D-glucosides including cellobiose-6'-P, gentiobiose-6'-P, cellobiitol-6-P, salicin-6-P, and arbutin-6-P. Is not able to phosphorylate alpha-D-glucosides. May have a dual role of kinase and transcriptional regulator of the cellobiose-PTS operon. This chain is Beta-glucoside kinase (bglK), found in Klebsiella pneumoniae.